Here is a 647-residue protein sequence, read N- to C-terminus: Glutamyl-tRNA(Gln) amidotransferase subunit B, mitochondrial (647 aa).

Residues Met1–Leu16 constitute a mitochondrion transit peptide. Positions Pro39 to Arg77 are disordered. The span at Asn58–Ser76 shows a compositional bias: low complexity.

Belongs to the GatB/GatE family. GatB subfamily. As to quaternary structure, subunit of the heterotrimeric GatCAB amidotransferase (AdT) complex, composed of A, B and C subunits.

The protein resides in the mitochondrion. The catalysed reaction is L-glutamyl-tRNA(Gln) + L-glutamine + ATP + H2O = L-glutaminyl-tRNA(Gln) + L-glutamate + ADP + phosphate + H(+). Allows the formation of correctly charged Gln-tRNA(Gln) through the transamidation of misacylated Glu-tRNA(Gln) in the mitochondria. The reaction takes place in the presence of glutamine and ATP through an activated gamma-phospho-Glu-tRNA(Gln). The sequence is that of Glutamyl-tRNA(Gln) amidotransferase subunit B, mitochondrial from Mycosarcoma maydis (Corn smut fungus).